Consider the following 212-residue polypeptide: High frequency lysogenization protein HflD homolog (212 aa).

Residues 92–128 are a coiled coil; sequence LIALERKLNAKSAALDELGKRIGQLERQLEHFELLSE.

It belongs to the HflD family.

The protein resides in the cytoplasm. Its subcellular location is the cell inner membrane. The sequence is that of High frequency lysogenization protein HflD homolog from Pectobacterium atrosepticum (strain SCRI 1043 / ATCC BAA-672) (Erwinia carotovora subsp. atroseptica).